The following is a 30-amino-acid chain: Platelet factor 4 (30 aa).

The protein belongs to the intercrine alpha (chemokine CxC) family. Homotetramer. Interacts with TNFAIP6 (via Link domain). Interacts with CCR1. Interacts with CXCR3. Post-translationally, binds non-covalently to a proteoglycan molecule.

It is found in the secreted. In terms of biological role, chemokine released during platelet aggregation that plays a role in different biological processes including hematopoiesis, cell proliferation, differentiation, and activation. Acts via different functional receptors including CCR1, CXCR3A or CXCR3B. Upon interaction with CXCR3A receptor, induces activated T-lymphocytes migration mediated via downstream Ras/extracellular signal-regulated kinase (ERK) signaling. Neutralizes the anticoagulant effect of heparin by binding more strongly to heparin than to the chondroitin-4-sulfate chains of the carrier molecule. Plays a role in the inhibition of hematopoiesis and in the maintenance of hematopoietic stem cell (HSC) quiescence. Chemotactic for neutrophils and monocytes via CCR1. Inhibits endothelial cell proliferation. In cooperation with toll-like receptor 8/TLR8, induces chromatin remodeling and activates inflammatory gene expression via the TBK1-IRF5 axis. In addition, induces myofibroblast differentiation and collagen synthesis in different precursor cells, including endothelial cells, by stimulating endothelial-to-mesenchymal transition. In Oryctolagus cuniculus (Rabbit), this protein is Platelet factor 4 (PF4).